A 271-amino-acid polypeptide reads, in one-letter code: MGFMTQKEMAPLPDVHQLSDEQTTLTVEHLNLYYGNKQALNDISIRIPKNQVTALIGPSGCGKSTLLRCFNRMNDLVDDCRTEGDIRLNGMPINDPQLDVAVLRRRIGMVFQRPNPFPKSIYENVIYGLRLQGLRDRRLLDDAVERALRAAALWHEVKDRLSDNALTLSSGQQQRLVIARAIAIEPEVLLLDEPTSALDPISTLIVEELMGTLKQHFTLVLVTHNMQQAARVSDYTAFINQGKLIEYNRTDDLFTSPTQRRTEDYITGRFG.

Residues 25–266 (LTVEHLNLYY…PTQRRTEDYI (242 aa)) form the ABC transporter domain. 57–64 (GPSGCGKS) contributes to the ATP binding site.

The protein belongs to the ABC transporter superfamily. Phosphate importer (TC 3.A.1.7) family. As to quaternary structure, the complex is composed of two ATP-binding proteins (PstB), two transmembrane proteins (PstC and PstA) and a solute-binding protein (PstS).

The protein localises to the cell inner membrane. The enzyme catalyses phosphate(out) + ATP + H2O = ADP + 2 phosphate(in) + H(+). Functionally, part of the ABC transporter complex PstSACB involved in phosphate import. Responsible for energy coupling to the transport system. This Pectobacterium atrosepticum (strain SCRI 1043 / ATCC BAA-672) (Erwinia carotovora subsp. atroseptica) protein is Phosphate import ATP-binding protein PstB 1.